We begin with the raw amino-acid sequence, 221 residues long: Ras-related protein Rab-27A (221 aa).

N-acetylserine is present on Ser2. Ser2 carries the post-translational modification Phosphoserine. GTP is bound at residue 16–24 (GDSGVGKTS). The Effector region motif lies at 38–46 (FITTVGIDF). GTP contacts are provided by residues 74–78 (DTAGQ), 133–136 (NKSD), and 163–165 (SAA). Cys123 and Cys188 form a disulfide bridge. S-geranylgeranyl cysteine attachment occurs at residues Cys219 and Cys221. Position 221 is a cysteine methyl ester (Cys221).

Belongs to the small GTPase superfamily. Rab family. As to quaternary structure, binds SYTL1, SYTL2, SLAC2B, MYRIP, SYTL3, SYTL4, SYTL5 and MLPH. Interacts with UNC13D. Interacts with RPH3A and RPH3A. Does not interact with the BLOC-3 complex (heterodimer of HPS1 and HPS4). Interacts (GDP-bound form preferentially) with DENND10. In terms of tissue distribution, detected in melanocytes. Expressed abundantly in the stomach and is predominantly localized at the apical region of gastric-surface mucus cells. Also expressed in the thymus and lung.

Its subcellular location is the membrane. It localises to the melanosome. It is found in the late endosome. The protein localises to the lysosome. It catalyses the reaction GTP + H2O = GDP + phosphate + H(+). Its activity is regulated as follows. Regulated by guanine nucleotide exchange factors (GEFs) which promote the exchange of bound GDP for free GTP, GTPase activating proteins (GAPs) which increase the GTP hydrolysis activity, and GDP dissociation inhibitors which inhibit the dissociation of the nucleotide from the GTPase. Activated by GEFs such as DENND10. In terms of biological role, small GTPase which cycles between active GTP-bound and inactive GDP-bound states. In its active state, binds to a variety of effector proteins to regulate homeostasis of late endocytic pathway, including endosomal positioning, maturation and secretion. Plays a role in cytotoxic granule exocytosis in lymphocytes. Required for both granule maturation and granule docking and priming at the immunologic synapse. This is Ras-related protein Rab-27A (Rab27a) from Mus musculus (Mouse).